The chain runs to 1231 residues: Pesticidal crystal protein Cry1Bd (1231 aa).

The protein belongs to the delta endotoxin family.

In terms of biological role, promotes colloidosmotic lysis by binding to the midgut epithelial cells of lepidopteran larvae. Toxic to Plutella xylostella. This chain is Pesticidal crystal protein Cry1Bd (cry1Bd), found in Bacillus thuringiensis subsp. wuhanensis.